We begin with the raw amino-acid sequence, 583 residues long: RuBisCO large subunit-binding protein subunit alpha, chloroplastic (583 aa).

The segment covering Met-1–Cys-14 has biased composition (polar residues). The segment at Met-1–Arg-35 is disordered. Residues Met-1 to Ala-45 constitute a chloroplast transit peptide. Residues Ser-15–Arg-31 are compositionally biased toward low complexity. The residue at position 89 (Ser-89) is a Phosphoserine.

Belongs to the chaperonin (HSP60) family. In terms of assembly, oligomer of probably six alpha and six beta subunits.

The protein resides in the plastid. It is found in the chloroplast. Functionally, this protein binds RuBisCO small and large subunits and is implicated in the assembly of the enzyme oligomer. This Brassica napus (Rape) protein is RuBisCO large subunit-binding protein subunit alpha, chloroplastic.